The following is a 24-amino-acid chain: M-poneritoxin-Ng2b (24 aa).

Leu-24 is modified (leucine amide).

Expressed by the venom gland.

It is found in the secreted. Functionally, has a broad spectrum of activity against both Gram-positive and Gram-negative bacteria. Is inactive against yeast, erythrocytes, and insects. The sequence is that of M-poneritoxin-Ng2b from Neoponera goeldii (Ponerine ant).